Consider the following 343-residue polypeptide: Phosphate acyltransferase (343 aa).

Belongs to the PlsX family. As to quaternary structure, homodimer. Probably interacts with PlsY.

Its subcellular location is the cytoplasm. It carries out the reaction a fatty acyl-[ACP] + phosphate = an acyl phosphate + holo-[ACP]. It functions in the pathway lipid metabolism; phospholipid metabolism. In terms of biological role, catalyzes the reversible formation of acyl-phosphate (acyl-PO(4)) from acyl-[acyl-carrier-protein] (acyl-ACP). This enzyme utilizes acyl-ACP as fatty acyl donor, but not acyl-CoA. The chain is Phosphate acyltransferase from Haemophilus ducreyi (strain 35000HP / ATCC 700724).